The primary structure comprises 197 residues: ATP-dependent Clp protease proteolytic subunit 1 (197 aa).

The Nucleophile role is filled by Ser-100. His-125 is a catalytic residue.

The protein belongs to the peptidase S14 family. In terms of assembly, fourteen ClpP subunits assemble into 2 heptameric rings which stack back to back to give a disk-like structure with a central cavity, resembling the structure of eukaryotic proteasomes.

Its subcellular location is the cytoplasm. It catalyses the reaction Hydrolysis of proteins to small peptides in the presence of ATP and magnesium. alpha-casein is the usual test substrate. In the absence of ATP, only oligopeptides shorter than five residues are hydrolyzed (such as succinyl-Leu-Tyr-|-NHMec, and Leu-Tyr-Leu-|-Tyr-Trp, in which cleavage of the -Tyr-|-Leu- and -Tyr-|-Trp bonds also occurs).. In terms of biological role, cleaves peptides in various proteins in a process that requires ATP hydrolysis. Has a chymotrypsin-like activity. Plays a major role in the degradation of misfolded proteins. This chain is ATP-dependent Clp protease proteolytic subunit 1, found in Gloeobacter violaceus (strain ATCC 29082 / PCC 7421).